A 368-amino-acid polypeptide reads, in one-letter code: p21-activated protein kinase-interacting protein 1-like (368 aa).

5 WD repeats span residues 45 to 82 (AHTA…EHGA), 85 to 123 (HHDG…CLKT), 126 to 165 (AHKG…SAFI), 207 to 245 (AFTK…CVCE), and 248 to 289 (AHEN…IESP).

The protein localises to the nucleus. The protein resides in the nucleolus. Its function is as follows. Negatively regulates the PAK1 kinase. PAK1 is a member of the PAK kinase family, which has been shown to play a positive role in the regulation of signaling pathways involving MAPK8 and RELA. PAK1 exists as an inactive homodimer, which is activated by binding of small GTPases such as CDC42 to an N-terminal regulatory domain. PAK1IP1 also binds to the N-terminus of PAK1, and inhibits the specific activation of PAK1 by CDC42. May be involved in ribosomal large subunit assembly. This is p21-activated protein kinase-interacting protein 1-like (pak1ip1) from Danio rerio (Zebrafish).